We begin with the raw amino-acid sequence, 362 residues long: 5-amino-6-(D-ribitylamino)uracil--L-tyrosine 4-hydroxyphenyl transferase (362 aa).

The region spanning 48 to 294 (ITYVVNRNIN…GDTIKNIQVS (247 aa)) is the Radical SAM core domain. [4Fe-4S] cluster-binding residues include cysteine 62, cysteine 66, and cysteine 69.

The protein belongs to the radical SAM superfamily. CofH family. Consists of two subunits, CofG and CofH. [4Fe-4S] cluster serves as cofactor.

It carries out the reaction 5-amino-6-(D-ribitylamino)uracil + L-tyrosine + S-adenosyl-L-methionine = 5-amino-5-(4-hydroxybenzyl)-6-(D-ribitylimino)-5,6-dihydrouracil + 2-iminoacetate + 5'-deoxyadenosine + L-methionine + H(+). The protein operates within cofactor biosynthesis; coenzyme F0 biosynthesis. Its function is as follows. Catalyzes the radical-mediated synthesis of 5-amino-5-(4-hydroxybenzyl)-6-(D-ribitylimino)-5,6-dihydrouracil from 5-amino-6-(D-ribitylamino)uracil and L-tyrosine. This is 5-amino-6-(D-ribitylamino)uracil--L-tyrosine 4-hydroxyphenyl transferase from Methanococcus aeolicus (strain ATCC BAA-1280 / DSM 17508 / OCM 812 / Nankai-3).